The primary structure comprises 441 residues: Ribosomal protein uS12 methylthiotransferase RimO (441 aa).

In terms of domain architecture, MTTase N-terminal spans 8–118 (PKIGFVSLGC…VLQHVHHYVP (111 aa)). Residues Cys17, Cys53, Cys82, Cys150, Cys154, and Cys157 each contribute to the [4Fe-4S] cluster site. The Radical SAM core domain maps to 136–373 (LTPRHYAYLK…MALQQQISAE (238 aa)). The TRAM domain maps to 376–441 (QEKVGREILV…DEYDLWGSLV (66 aa)).

This sequence belongs to the methylthiotransferase family. RimO subfamily. The cofactor is [4Fe-4S] cluster.

The protein resides in the cytoplasm. It catalyses the reaction L-aspartate(89)-[ribosomal protein uS12]-hydrogen + (sulfur carrier)-SH + AH2 + 2 S-adenosyl-L-methionine = 3-methylsulfanyl-L-aspartate(89)-[ribosomal protein uS12]-hydrogen + (sulfur carrier)-H + 5'-deoxyadenosine + L-methionine + A + S-adenosyl-L-homocysteine + 2 H(+). Functionally, catalyzes the methylthiolation of an aspartic acid residue of ribosomal protein uS12. The polypeptide is Ribosomal protein uS12 methylthiotransferase RimO (Cronobacter sakazakii (strain ATCC BAA-894) (Enterobacter sakazakii)).